The primary structure comprises 156 residues: Ribosomal RNA large subunit methyltransferase H (156 aa).

S-adenosyl-L-methionine-binding positions include leucine 73, glycine 104, and 123 to 128 (ISSMTL).

This sequence belongs to the RNA methyltransferase RlmH family. In terms of assembly, homodimer.

It localises to the cytoplasm. The catalysed reaction is pseudouridine(1915) in 23S rRNA + S-adenosyl-L-methionine = N(3)-methylpseudouridine(1915) in 23S rRNA + S-adenosyl-L-homocysteine + H(+). In terms of biological role, specifically methylates the pseudouridine at position 1915 (m3Psi1915) in 23S rRNA. The chain is Ribosomal RNA large subunit methyltransferase H from Janthinobacterium sp. (strain Marseille) (Minibacterium massiliensis).